Reading from the N-terminus, the 366-residue chain is Quinolinate synthase (366 aa).

Iminosuccinate is bound by residues H44 and S61. A [4Fe-4S] cluster-binding site is contributed by C108. Iminosuccinate is bound by residues 139–141 (YIN) and S160. [4Fe-4S] cluster is bound at residue C228. Iminosuccinate-binding positions include 254-256 (HPE) and T271. C318 serves as a coordination point for [4Fe-4S] cluster.

This sequence belongs to the quinolinate synthase family. Type 3 subfamily. [4Fe-4S] cluster serves as cofactor.

It localises to the cytoplasm. It catalyses the reaction iminosuccinate + dihydroxyacetone phosphate = quinolinate + phosphate + 2 H2O + H(+). The protein operates within cofactor biosynthesis; NAD(+) biosynthesis; quinolinate from iminoaspartate: step 1/1. Catalyzes the condensation of iminoaspartate with dihydroxyacetone phosphate to form quinolinate. The protein is Quinolinate synthase of Listeria monocytogenes serovar 1/2a (strain ATCC BAA-679 / EGD-e).